We begin with the raw amino-acid sequence, 364 residues long: Adenosine 3'-phospho 5'-phosphosulfate transporter 2 (364 aa).

The next 10 helical transmembrane spans lie at 39-59 (WLQF…YGYM), 74-94 (WTLT…ECII), 106-126 (IYGV…ASVG), 131-151 (PTQV…GILI), 157-177 (GWID…FTLA), 187-206 (SRGY…IGNI), 231-251 (VFIF…PFFL), 257-277 (TFGY…VVLT), 281-301 (VFGA…TIIL), and 310-330 (FTIE…LNLY).

Belongs to the nucleotide-sugar transporter family. SLC35B subfamily.

The protein localises to the golgi apparatus membrane. Its function is as follows. Mediates the transport of adenosine 3'-phospho 5'-phosphosulfate (PAPS), from cytosol into Golgi. PAPS is a universal sulfuryl donor for sulfation events that take place in the Golgi. This Caenorhabditis elegans protein is Adenosine 3'-phospho 5'-phosphosulfate transporter 2 (pst-2).